The following is a 449-amino-acid chain: Phosphoglucosamine mutase (449 aa).

The active-site Phosphoserine intermediate is S100. Mg(2+)-binding residues include S100, D241, D243, and D245. Position 100 is a phosphoserine (S100).

Belongs to the phosphohexose mutase family. Mg(2+) is required as a cofactor. Post-translationally, activated by phosphorylation.

It catalyses the reaction alpha-D-glucosamine 1-phosphate = D-glucosamine 6-phosphate. Its function is as follows. Catalyzes the conversion of glucosamine-6-phosphate to glucosamine-1-phosphate. This Geobacillus kaustophilus (strain HTA426) protein is Phosphoglucosamine mutase.